Consider the following 118-residue polypeptide: UPF0449 protein C19orf25 (118 aa).

Tyr63 is subject to Phosphotyrosine. The stretch at 81–109 (NVLRQRCELLQRAGEDLEREVAQMKQAAL) forms a coiled coil.

The protein belongs to the UPF0449 family.

In Homo sapiens (Human), this protein is UPF0449 protein C19orf25 (C19orf25).